Reading from the N-terminus, the 481-residue chain is Argininosuccinate lyase (481 aa).

Polar residues predominate over residues Met1–Glu17. The interval Met1 to Trp25 is disordered.

This sequence belongs to the lyase 1 family. Argininosuccinate lyase subfamily.

It is found in the cytoplasm. It carries out the reaction 2-(N(omega)-L-arginino)succinate = fumarate + L-arginine. It functions in the pathway amino-acid biosynthesis; L-arginine biosynthesis; L-arginine from L-ornithine and carbamoyl phosphate: step 3/3. The polypeptide is Argininosuccinate lyase (Gluconobacter oxydans (strain 621H) (Gluconobacter suboxydans)).